The primary structure comprises 712 residues: Solute carrier organic anion transporter family member 1C1 (712 aa).

Topologically, residues 1–43 are cytoplasmic; sequence MDTSSKENIQLFCKTSVQPVGRPSFKTEYPSSEEKQPCCGELK. A helical membrane pass occupies residues 44–63; the sequence is VFLCALSFVYFAKALAEGYL. At 64 to 82 the chain is on the extracellular side; that stretch reads KSTITQIERRFDIPSSLVG. The helical transmembrane segment at 83-103 threads the bilayer; sequence VIDGSFEIGNLLVITFVSYFG. Over 104-109 the chain is Cytoplasmic; it reads AKLHRP. A helical membrane pass occupies residues 110 to 134; sequence KIIGAGCVIMGVGTLLIAMPQFFME. At 135 to 184 the chain is on the extracellular side; sequence QYKYERYSPSSNSTLSISPCLLESSSQLPVSVMEKSKSKISNECEVDTSS. N-linked (GlcNAc...) asparagine glycosylation is present at asparagine 146. Residues 185–213 form a helical membrane-spanning segment; it reads SMWIYVFLGNLLRGIGETPIQPLGIAYLD. The Cytoplasmic portion of the chain corresponds to 214–232; sequence DFASEDNAAFYIGCVQTVA. The helical transmembrane segment at 233-253 threads the bilayer; that stretch reads IIGPIFGFLLGSLCAKLYVDI. The Extracellular segment spans residues 254 to 271; sequence GFVNLDHITITPKDPQWV. The helical transmembrane segment at 272 to 296 threads the bilayer; sequence GAWWLGYLIAGIISLLAAVPFWYLP. Over 297 to 348 the chain is Cytoplasmic; sequence KSLPRSQSREDSNSSSEKSKFIIDDHTDYQTPQGENAKIMEMARDFLPSLKN. A helical transmembrane segment spans residues 349-370; sequence LFGNPVYFLYLCTSTVQFNSLF. The Extracellular segment spans residues 371-390; that stretch reads GMVTYKPKYIEQQYGQSSSR. Residues 391 to 414 traverse the membrane as a helical segment; it reads ANFVIGLINIPAVALGIFSGGIVM. Residues 415-418 are Cytoplasmic-facing; the sequence is KKFR. A helical transmembrane segment spans residues 419-442; that stretch reads ISVCGAAKLYLGSSVFGYLLFLSL. Residues 443–554 are Extracellular-facing; that stretch reads FALGCENSDV…NGCPQMFLYF (112 aa). The region spanning 470–525 is the Kazal-like domain; it reads RALFSDCNSRCKCSETKWEPMCGENGITYVSACLAGCQTSNRSGKNIIFYNCTCVG. 3 cysteine pairs are disulfide-bonded: cysteine 476–cysteine 506, cysteine 482–cysteine 502, and cysteine 491–cysteine 523. Asparagine 510, asparagine 520, and asparagine 533 each carry an N-linked (GlcNAc...) asparagine glycan. Residues 555–577 form a helical membrane-spanning segment; the sequence is LVISVITSYTLSLGGIPGYILLL. Topologically, residues 578 to 586 are cytoplasmic; that stretch reads RCIKPQLKS. Residues 587–612 traverse the membrane as a helical segment; that stretch reads FALGIYTLAIRVLAGIPAPVYFGVLI. Residues 613 to 646 lie on the Extracellular side of the membrane; sequence DTSCLKWGFKRCGSRGSCRLYDSNVFRHIYLGLT. Residues 647–664 traverse the membrane as a helical segment; the sequence is VILGTVSILLSIAVLFIL. The Cytoplasmic segment spans residues 665 to 712; sequence KKNYVSKHRSFITKRERTMVSTRFQKENYTTSDHLLQPNYWPGKETQL.

This sequence belongs to the organo anion transporter (TC 2.A.60) family. As to expression, highly expressed in brain and in Leydig cells in testis. Localized in nests of Leydig cells (at protein level). Expressed in choroid plexus (at protein level). Not strongly enriched in cerebral microvessels.

Its subcellular location is the cell membrane. It carries out the reaction 3,3',5'-triiodo-L-thyronine(out) = 3,3',5'-triiodo-L-thyronine(in). The enzyme catalyses L-thyroxine(out) = L-thyroxine(in). It catalyses the reaction L-thyroxine sulfate(out) = L-thyroxine sulfate(in). Mediates the Na(+)-independent high affinity transport of organic anions such as the thyroid hormones L-thyroxine (T4), L-thyroxine sulfate (T4S), and 3,3',5'-triiodo-L-thyronine (reverse T3, rT3) at the plasma membrane. Regulates T4 levels in different brain regions by transporting T4, and also by serving as an export pump for T4S, which is a source of T4 after hydrolysis by local sulfatases. Increases the access of these substrates to the intracellular sites where they are metabolized by the deiodinases. Other potential substrates, such as triiodothyronine (T3), 17-beta-glucuronosyl estradiol (17beta-estradiol 17-O-(beta-D-glucuronate)), estrone-3-sulfate (E1S) and sulfobromophthalein (BSP) are transported with much lower efficiency. Transports T4 and E1S in a pH-insensitive manner. Facilitates the transport of thyroid hormones across the blood-brain barrier and into glia and neuronal cells in the brain. The chain is Solute carrier organic anion transporter family member 1C1 (SLCO1C1) from Homo sapiens (Human).